A 114-amino-acid polypeptide reads, in one-letter code: UPF0339 protein PM0519 (114 aa).

2 tandem repeats follow at residues 11-59 and 62-110.

The protein belongs to the UPF0339 family. Duplicated subfamily.

The polypeptide is UPF0339 protein PM0519 (Pasteurella multocida (strain Pm70)).